A 550-amino-acid polypeptide reads, in one-letter code: Hydroxylamine reductase (550 aa).

4 residues coordinate [2Fe-2S] cluster: Cys-3, Cys-6, Cys-18, and Cys-25. 8 residues coordinate hybrid [4Fe-2O-2S] cluster: His-249, Glu-273, Cys-317, Cys-405, Cys-433, Cys-458, Glu-492, and Lys-494. Cysteine persulfide is present on Cys-405.

This sequence belongs to the HCP family. [2Fe-2S] cluster is required as a cofactor. The cofactor is hybrid [4Fe-2O-2S] cluster.

It localises to the cytoplasm. The catalysed reaction is A + NH4(+) + H2O = hydroxylamine + AH2 + H(+). In terms of biological role, catalyzes the reduction of hydroxylamine to form NH(3) and H(2)O. The polypeptide is Hydroxylamine reductase (Proteus mirabilis (strain HI4320)).